We begin with the raw amino-acid sequence, 162 residues long: Probable chemoreceptor glutamine deamidase CheD (162 aa).

Belongs to the CheD family.

The catalysed reaction is L-glutaminyl-[protein] + H2O = L-glutamyl-[protein] + NH4(+). Its function is as follows. Probably deamidates glutamine residues to glutamate on methyl-accepting chemotaxis receptors (MCPs), playing an important role in chemotaxis. In Pyrococcus horikoshii (strain ATCC 700860 / DSM 12428 / JCM 9974 / NBRC 100139 / OT-3), this protein is Probable chemoreceptor glutamine deamidase CheD.